We begin with the raw amino-acid sequence, 130 residues long: Small ribosomal subunit protein uS9 (130 aa).

It belongs to the universal ribosomal protein uS9 family.

This Agathobacter rectalis (strain ATCC 33656 / DSM 3377 / JCM 17463 / KCTC 5835 / VPI 0990) (Eubacterium rectale) protein is Small ribosomal subunit protein uS9.